Reading from the N-terminus, the 702-residue chain is Ribosomal RNA large subunit methyltransferase K/L (702 aa).

The THUMP domain maps to 43–154; sequence LVYQSLMWSR…KETASIALDL (112 aa).

This sequence belongs to the methyltransferase superfamily. RlmKL family.

The protein resides in the cytoplasm. It carries out the reaction guanosine(2445) in 23S rRNA + S-adenosyl-L-methionine = N(2)-methylguanosine(2445) in 23S rRNA + S-adenosyl-L-homocysteine + H(+). The enzyme catalyses guanosine(2069) in 23S rRNA + S-adenosyl-L-methionine = N(2)-methylguanosine(2069) in 23S rRNA + S-adenosyl-L-homocysteine + H(+). Functionally, specifically methylates the guanine in position 2445 (m2G2445) and the guanine in position 2069 (m7G2069) of 23S rRNA. This is Ribosomal RNA large subunit methyltransferase K/L from Shigella boydii serotype 18 (strain CDC 3083-94 / BS512).